The primary structure comprises 162 residues: RNA pyrophosphohydrolase (162 aa).

The Nudix hydrolase domain occupies Glu7–Glu149. Residues Gly40–Gly61 carry the Nudix box motif.

This sequence belongs to the Nudix hydrolase family. RppH subfamily. A divalent metal cation is required as a cofactor.

Its function is as follows. Accelerates the degradation of transcripts by removing pyrophosphate from the 5'-end of triphosphorylated RNA, leading to a more labile monophosphorylated state that can stimulate subsequent ribonuclease cleavage. The protein is RNA pyrophosphohydrolase of Wolbachia pipientis subsp. Culex pipiens (strain wPip).